The primary structure comprises 359 residues: Nicotinate-nucleotide--dimethylbenzimidazole phosphoribosyltransferase (359 aa).

Residue glutamate 318 is the Proton acceptor of the active site.

This sequence belongs to the CobT family. As to quaternary structure, homodimer.

The enzyme catalyses 5,6-dimethylbenzimidazole + nicotinate beta-D-ribonucleotide = alpha-ribazole 5'-phosphate + nicotinate + H(+). It participates in nucleoside biosynthesis; alpha-ribazole biosynthesis; alpha-ribazole from 5,6-dimethylbenzimidazole: step 1/2. Functionally, catalyzes the synthesis of alpha-ribazole-5'-phosphate from nicotinate mononucleotide (NAMN) and 5,6-dimethylbenzimidazole (DMB). This chain is Nicotinate-nucleotide--dimethylbenzimidazole phosphoribosyltransferase, found in Shigella sonnei (strain Ss046).